A 207-amino-acid chain; its full sequence is Glycerol-3-phosphate acyltransferase (207 aa).

5 consecutive transmembrane segments (helical) span residues 2–22 (ILVL…GVVI), 47–67 (MLGP…GTLA), 72–92 (ILFG…AVFG), 121–141 (FFVI…MVSV), and 155–175 (LVYH…VFLI).

It belongs to the PlsY family. Probably interacts with PlsX.

Its subcellular location is the cell membrane. The catalysed reaction is an acyl phosphate + sn-glycerol 3-phosphate = a 1-acyl-sn-glycero-3-phosphate + phosphate. It functions in the pathway lipid metabolism; phospholipid metabolism. In terms of biological role, catalyzes the transfer of an acyl group from acyl-phosphate (acyl-PO(4)) to glycerol-3-phosphate (G3P) to form lysophosphatidic acid (LPA). This enzyme utilizes acyl-phosphate as fatty acyl donor, but not acyl-CoA or acyl-ACP. The protein is Glycerol-3-phosphate acyltransferase of Lacticaseibacillus casei (strain BL23) (Lactobacillus casei).